Consider the following 177-residue polypeptide: Flavodoxin (177 aa).

Positions 4 to 173 constitute a Flavodoxin-like domain; sequence IGIFFGSDTG…RIDSWLEKLK (170 aa).

This sequence belongs to the flavodoxin family. It depends on FMN as a cofactor.

Functionally, low-potential electron donor to a number of redox enzymes. NifF is the electron donor to nitrogenase. The polypeptide is Flavodoxin (nifF) (Enterobacter agglomerans (Erwinia herbicola)).